The chain runs to 328 residues: uncharacterized protein (328 aa).

The residue at position 170 (S170) is a Phosphoserine.

Its subcellular location is the cytoplasm. The protein resides in the nucleus. This is an uncharacterized protein from Schizosaccharomyces pombe (strain 972 / ATCC 24843) (Fission yeast).